Reading from the N-terminus, the 922-residue chain is Ubiquitin carboxyl-terminal hydrolase 29 (922 aa).

The interval 160-196 (GILENQGGKGQNTLSSDVQTNEDILKEDNPVPNKKYK) is disordered. Polar residues predominate over residues 170 to 181 (QNTLSSDVQTNE). The 601-residue stretch at 285–885 (QGFPNLGNTC…SGYIFFYMHN (601 aa)) folds into the USP domain. The active-site Nucleophile is the cysteine 294. Catalysis depends on histidine 840, which acts as the Proton acceptor.

The protein belongs to the peptidase C19 family.

The protein localises to the cytoplasm. It localises to the perinuclear region. It catalyses the reaction Thiol-dependent hydrolysis of ester, thioester, amide, peptide and isopeptide bonds formed by the C-terminal Gly of ubiquitin (a 76-residue protein attached to proteins as an intracellular targeting signal).. Deubiquitinase involved in innate antiviral immunity by mediating 'Lys-48'-linked deubiquitination of CGAS, thereby promoting its stabilization. The chain is Ubiquitin carboxyl-terminal hydrolase 29 from Homo sapiens (Human).